Here is an 825-residue protein sequence, read N- to C-terminus: Translation initiation factor IF-2 (825 aa).

Basic and acidic residues-rich tracts occupy residues 1–19, 35–45, 70–98, and 113–122; these read MTKK…DNKK, RKGEKKTEGKR, LLKD…EYKK, and KKVESVEKPA. The disordered stretch occupies residues 1-239; sequence MTKKQENETS…TQRKDRPLPE (239 aa). The segment covering 158 to 169 has biased composition (low complexity); that stretch reads PSSSRRPSSRPS. The span at 181–191 shows a compositional bias: basic residues; it reads GRRRKSGKPGR. Polar residues predominate over residues 194 to 208; it reads QNSYADQGRGANSNR. Residues 211–220 are compositionally biased toward basic residues; the sequence is QRKRKNKKHQ. The tr-type G domain maps to 326–495; it reads VRPPVVTIMG…ILEADMLELK (170 aa). Residues 335–342 form a G1 region; it reads GHVDHGKT. A GTP-binding site is contributed by 335-342; that stretch reads GHVDHGKT. The G2 stretch occupies residues 360-364; it reads GITQN. Residues 381–384 are G3; the sequence is DTPG. GTP-binding positions include 381-385 and 435-438; these read DTPGH and NKMD. The segment at 435 to 438 is G4; the sequence is NKMD. Residues 471–473 are G5; it reads SAK.

It belongs to the TRAFAC class translation factor GTPase superfamily. Classic translation factor GTPase family. IF-2 subfamily.

Its subcellular location is the cytoplasm. Functionally, one of the essential components for the initiation of protein synthesis. Protects formylmethionyl-tRNA from spontaneous hydrolysis and promotes its binding to the 30S ribosomal subunits. Also involved in the hydrolysis of GTP during the formation of the 70S ribosomal complex. This is Translation initiation factor IF-2 from Lactobacillus delbrueckii subsp. bulgaricus (strain ATCC BAA-365 / Lb-18).